A 287-amino-acid polypeptide reads, in one-letter code: Prepilin leader peptidase/N-methyltransferase (287 aa).

6 consecutive transmembrane segments (helical) span residues 10–30, 101–121, 125–145, 177–197, 226–246, and 253–273; these read LGFP…NVVI, ISIQ…ASVW, FGWQ…MSGI, KPAL…WWLF, ILPI…IWLF, and ATPI…FFWG.

This sequence belongs to the peptidase A24 family.

The protein resides in the cell inner membrane. It carries out the reaction Typically cleaves a -Gly-|-Phe- bond to release an N-terminal, basic peptide of 5-8 residues from type IV prepilin, and then N-methylates the new N-terminal amino group, the methyl donor being S-adenosyl-L-methionine.. Plays an essential role in type IV pili and type II pseudopili formation by proteolytically removing the leader sequence from substrate proteins and subsequently monomethylating the alpha-amino group of the newly exposed N-terminal phenylalanine. The sequence is that of Prepilin leader peptidase/N-methyltransferase (xpsO) from Xanthomonas campestris pv. campestris (strain ATCC 33913 / DSM 3586 / NCPPB 528 / LMG 568 / P 25).